The primary structure comprises 101 residues: Urease subunit beta (101 aa).

This sequence belongs to the urease beta subunit family. As to quaternary structure, heterotrimer of UreA (gamma), UreB (beta) and UreC (alpha) subunits. Three heterotrimers associate to form the active enzyme.

It localises to the cytoplasm. It carries out the reaction urea + 2 H2O + H(+) = hydrogencarbonate + 2 NH4(+). It functions in the pathway nitrogen metabolism; urea degradation; CO(2) and NH(3) from urea (urease route): step 1/1. This chain is Urease subunit beta, found in Rhizobium rhizogenes (strain K84 / ATCC BAA-868) (Agrobacterium radiobacter).